The primary structure comprises 287 residues: Ribosomal RNA small subunit methyltransferase A (287 aa).

Asn-28, Leu-30, Gly-55, Glu-77, Asp-103, and Asn-123 together coordinate S-adenosyl-L-methionine.

Belongs to the class I-like SAM-binding methyltransferase superfamily. rRNA adenine N(6)-methyltransferase family. RsmA subfamily.

It is found in the cytoplasm. The enzyme catalyses adenosine(1518)/adenosine(1519) in 16S rRNA + 4 S-adenosyl-L-methionine = N(6)-dimethyladenosine(1518)/N(6)-dimethyladenosine(1519) in 16S rRNA + 4 S-adenosyl-L-homocysteine + 4 H(+). Functionally, specifically dimethylates two adjacent adenosines (A1518 and A1519) in the loop of a conserved hairpin near the 3'-end of 16S rRNA in the 30S particle. May play a critical role in biogenesis of 30S subunits. In Rhodopseudomonas palustris (strain TIE-1), this protein is Ribosomal RNA small subunit methyltransferase A.